Consider the following 570-residue polypeptide: Apyrase (570 aa).

The N-terminal stretch at 1–23 (MALVRFATIITVLCHLAIQDGAA) is a signal peptide. 3 residues coordinate a divalent metal cation: Asp-43, His-45, and Asp-94. An N-linked (GlcNAc...) asparagine glycan is attached at Asn-108. Asn-126, His-229, and His-253 together coordinate a divalent metal cation. 2 N-linked (GlcNAc...) asparagine glycosylation sites follow: Asn-287 and Asn-326. Residue Arg-367 participates in AMP binding. Asn-387 carries N-linked (GlcNAc...) asparagine glycosylation. Residues Arg-402 and Asp-507 each contribute to the AMP site. N-linked (GlcNAc...) asparagine glycosylation is found at Asn-552 and Asn-555.

Belongs to the 5'-nucleotidase family. Interacts with human PLAT; the interaction results in PLAT activation probably via an allosteric activation mechanism. It depends on a divalent metal cation as a cofactor. As to expression, saliva (at protein level). Salivary gland (at protein level). Not detected in midgut.

It is found in the secreted. The enzyme catalyses a ribonucleoside 5'-triphosphate + 2 H2O = a ribonucleoside 5'-phosphate + 2 phosphate + 2 H(+). In terms of biological role, cleaves adenosine triphosphate (ATP) and adenosine diphosphate (ADP) to adenosine monophosphate (AMP) and inorganic phosphate. Enhances fibrin degradation in the midgut blood bolus. Activates human tissue plasminogen activator (PLAT), probably via an allosteric activation mechanism. Inhibits ADP-mediated host platelet aggregation in vitro and in mosquito midgut. Inhibits host neutrophil activation in the mosquito midgut: reduces neutrophil extracellular traps formation in the presence of platelets and the formation of total cell- and mitochondrial-derived reactive oxygen species. (Microbial infection) Promotes Plasmodium berghei parasite transmission from the mammalian host to the mosquito probably by reducing the blood bolus viscosity. Facilitates sporozoite transmission from the mosquito to the mammalian host during blood feeding. The polypeptide is Apyrase (Anopheles gambiae (African malaria mosquito)).